A 425-amino-acid chain; its full sequence is Serine--tRNA ligase (425 aa).

An L-serine-binding site is contributed by 228-230 (TAE). 259 to 261 (RSE) is an ATP binding site. Residue Glu-282 participates in L-serine binding. Residue 346 to 349 (EIAS) participates in ATP binding. Ser-382 contributes to the L-serine binding site.

The protein belongs to the class-II aminoacyl-tRNA synthetase family. Type-1 seryl-tRNA synthetase subfamily. In terms of assembly, homodimer. The tRNA molecule binds across the dimer.

It localises to the cytoplasm. It catalyses the reaction tRNA(Ser) + L-serine + ATP = L-seryl-tRNA(Ser) + AMP + diphosphate + H(+). It carries out the reaction tRNA(Sec) + L-serine + ATP = L-seryl-tRNA(Sec) + AMP + diphosphate + H(+). It participates in aminoacyl-tRNA biosynthesis; selenocysteinyl-tRNA(Sec) biosynthesis; L-seryl-tRNA(Sec) from L-serine and tRNA(Sec): step 1/1. Catalyzes the attachment of serine to tRNA(Ser). Is also able to aminoacylate tRNA(Sec) with serine, to form the misacylated tRNA L-seryl-tRNA(Sec), which will be further converted into selenocysteinyl-tRNA(Sec). The polypeptide is Serine--tRNA ligase (Rickettsia canadensis (strain McKiel)).